A 110-amino-acid polypeptide reads, in one-letter code: MITLDWEKANGLITTVVQDATTKQVLMVAYMNQESLAKTMATGETWFWSRSRKTLWHKGATSGNIQTVKTIAVDCDADTLLVTVDPAGPACHTGHISCFYRHYPEGKDLT.

D74 provides a ligand contact to Mg(2+). Zn(2+) is bound at residue C75. The Mg(2+) site is built by D76 and D78. The Zn(2+) site is built by C91 and C98.

Belongs to the PRA-CH family. In terms of assembly, homodimer. Mg(2+) is required as a cofactor. Zn(2+) serves as cofactor.

The protein localises to the cytoplasm. It carries out the reaction 1-(5-phospho-beta-D-ribosyl)-5'-AMP + H2O = 1-(5-phospho-beta-D-ribosyl)-5-[(5-phospho-beta-D-ribosylamino)methylideneamino]imidazole-4-carboxamide. It functions in the pathway amino-acid biosynthesis; L-histidine biosynthesis; L-histidine from 5-phospho-alpha-D-ribose 1-diphosphate: step 3/9. Functionally, catalyzes the hydrolysis of the adenine ring of phosphoribosyl-AMP. In Lacticaseibacillus casei (strain BL23) (Lactobacillus casei), this protein is Phosphoribosyl-AMP cyclohydrolase.